The sequence spans 507 residues: Type II methyltransferase M.PstI (507 aa).

This sequence belongs to the N(4)/N(6)-methyltransferase family. Monomer.

The catalysed reaction is a 2'-deoxyadenosine in DNA + S-adenosyl-L-methionine = an N(6)-methyl-2'-deoxyadenosine in DNA + S-adenosyl-L-homocysteine + H(+). Functionally, a gamma subtype methylase that recognizes the double-stranded sequence 5'-CTGCAG-3', methylates A-5 on both strands, and protects the DNA from cleavage by the PstI endonuclease. The chain is Type II methyltransferase M.PstI (pstIM) from Providencia stuartii.